The sequence spans 1081 residues: Serine/threonine-protein kinase PKH2 (1081 aa).

Phosphoserine is present on Ser138. The region spanning 179-443 is the Protein kinase domain; it reads FKFGSVIGDG…ISQIKEHHFF (265 aa). ATP is bound by residues 189 to 191 and Lys208; that span reads AYS. Residues 210–255 are PIF-pocket; it reads LNKEYLIRQKKVKYVSIEKTALQKLNNSPSVVRLFSTFQDESSLYF. ATP-binding positions include 258-260 and Asp264; that span reads EYA. Asp303 serves as the catalytic Proton acceptor. ATP is bound by residues Glu307 and Asp321. The span at 494–526 shows a compositional bias: polar residues; it reads HLVTQRSASSPSVEETTHSTLYNNNTHASTESE. Disordered regions lie at residues 494–652, 805–833, and 970–1017; these read HLVT…TYQM, NRSG…NKGS, and IERR…INSA. Over residues 527 to 538 the composition is skewed to basic and acidic residues; sequence ISIKKRPTDERT. Composition is skewed to low complexity over residues 564-575 and 582-602; these read AASAALAASAAL and SYPT…TSRP. Ser619 is modified (phosphoserine). The span at 632–645 shows a compositional bias: pro residues; sequence PMPPYTPPMSPPMT. Polar residues-rich tracts occupy residues 805–819 and 998–1017; these read NRSG…NSSP and HSQS…INSA. Ser1009 bears the Phosphoserine mark.

The protein belongs to the protein kinase superfamily. AGC Ser/Thr protein kinase family. PDPK1 subfamily.

Its subcellular location is the nucleus. It localises to the cytoplasm. The protein resides in the cell cortex. It catalyses the reaction L-seryl-[protein] + ATP = O-phospho-L-seryl-[protein] + ADP + H(+). The catalysed reaction is L-threonyl-[protein] + ATP = O-phospho-L-threonyl-[protein] + ADP + H(+). With respect to regulation, sphingoid base activates kinase activity. In terms of biological role, serine/threonine-protein kinase which is part sphingolipid-mediated signaling pathway that is required for the internalization step of endocytosis by regulating eisosome assembly and organization, and modulating the organization of the plasma membrane. Phosphorylates and activates PKC1. Activates YPK1 and YPK2, 2 components of signaling cascade required for maintenance of cell wall integrity. Required for stress-induced P-body assembly and regulates global mRNA decay at the deadenylation step. In Saccharomyces cerevisiae (strain ATCC 204508 / S288c) (Baker's yeast), this protein is Serine/threonine-protein kinase PKH2 (PKH2).